A 134-amino-acid chain; its full sequence is Profilin-2 (134 aa).

Cys13 and Cys118 are joined by a disulfide. The Involved in PIP2 interaction motif lies at 84–100; the sequence is AVIRGKKGSGGITIKKT. Thr114 carries the post-translational modification Phosphothreonine.

It belongs to the profilin family. In terms of assembly, occurs in many kinds of cells as a complex with monomeric actin in a 1:1 ratio. Phosphorylated by MAP kinases.

It localises to the cytoplasm. The protein localises to the cytoskeleton. Functionally, binds to actin and affects the structure of the cytoskeleton. At high concentrations, profilin prevents the polymerization of actin, whereas it enhances it at low concentrations. The sequence is that of Profilin-2 from Olea europaea (Common olive).